Here is a 362-residue protein sequence, read N- to C-terminus: MSHSPAQLSASPSSVGDGDRLLRAARGEVVDRPPVWMMRQAGRYMAAYRELQSKYTFKQRCEIPELAIEISLQPFRAFAPDGVIMFSDILTPLEGMGIPFELVEQQGPIIDPPIRSQAQVEQIRLLEPEESLPFIKTILSTLRREVEGKATLLGFVGSPWTLACYAVEGRSSKDYAHIKSLAFTQPQVLHQLLSKLADSIARYVIYQIECGAQVVQLFDTWAGQLSPGDYETWALPYQKQIVDQVKARCPQVPLILYINGSAALLERVGKAGIDVFSLDWMSDMAEARARLGSLAVQGNLDPMVLLGSPKFIRQRTLEVIQKAGSRGHIMNLGHGVHHTTPEANVHHFFETVRQAAELLKAL.

Substrate-binding positions include 39-43 (RQAGR), Asp88, Tyr165, Thr220, and His334.

This sequence belongs to the uroporphyrinogen decarboxylase family. Homodimer.

The protein localises to the cytoplasm. It carries out the reaction uroporphyrinogen III + 4 H(+) = coproporphyrinogen III + 4 CO2. Its pathway is porphyrin-containing compound metabolism; protoporphyrin-IX biosynthesis; coproporphyrinogen-III from 5-aminolevulinate: step 4/4. Functionally, catalyzes the decarboxylation of four acetate groups of uroporphyrinogen-III to yield coproporphyrinogen-III. The chain is Uroporphyrinogen decarboxylase from Synechococcus sp. (strain JA-3-3Ab) (Cyanobacteria bacterium Yellowstone A-Prime).